The primary structure comprises 294 residues: Kynurenine formamidase (294 aa).

The segment covering 1-14 (MSRWKDMNKDELER) has biased composition (basic and acidic residues). Residues 1 to 20 (MSRWKDMNKDELERQFSPSQ) are disordered. An HGGXW motif is present at residues 84-88 (HGGYW). The active-site Nucleophile is the Ser153. Active-site residues include Asp236 and His269.

The protein belongs to the kynurenine formamidase family. As to quaternary structure, homodimer.

It is found in the cytoplasm. It localises to the cytosol. The protein resides in the nucleus. It catalyses the reaction N-formyl-L-kynurenine + H2O = L-kynurenine + formate + H(+). It functions in the pathway amino-acid degradation; L-tryptophan degradation via kynurenine pathway; L-kynurenine from L-tryptophan: step 2/2. Its function is as follows. Catalyzes the hydrolysis of N-formyl-L-kynurenine to L-kynurenine, the second step in the kynurenine pathway of tryptophan degradation. Kynurenine may be further oxidized to nicotinic acid, NAD(H) and NADP(H). Required for elimination of toxic metabolites. The chain is Kynurenine formamidase (afmid) from Salmo salar (Atlantic salmon).